The primary structure comprises 93 residues: Bombyxin-related peptide B (93 aa).

The signal sequence occupies residues 1-21; it reads MKFVLVLVSLALLVSLASVQG. 3 cysteine pairs are disulfide-bonded: C25–C80, C37–C93, and C79–C84. Residues 47 to 71 constitute a propeptide, c peptide like; it reads SGAMGAAAMYGTRGWRWAAMGGNRG.

Belongs to the insulin family. In terms of assembly, heterodimer of a B chain and an A chain linked by two disulfide bonds. Located in 4 pairs of medial neurosecretory cells in the brain.

The protein resides in the secreted. The chain is Bombyxin-related peptide B from Agrius convolvuli (Convolvulus hawk-moth).